We begin with the raw amino-acid sequence, 366 residues long: Ribosomal RNA large subunit methyltransferase M (366 aa).

S-adenosyl-L-methionine is bound by residues serine 187, 220–223 (SPGG), aspartate 239, aspartate 259, and aspartate 276. Lysine 305 functions as the Proton acceptor in the catalytic mechanism.

The protein belongs to the class I-like SAM-binding methyltransferase superfamily. RNA methyltransferase RlmE family. RlmM subfamily. Monomer.

It localises to the cytoplasm. The enzyme catalyses cytidine(2498) in 23S rRNA + S-adenosyl-L-methionine = 2'-O-methylcytidine(2498) in 23S rRNA + S-adenosyl-L-homocysteine + H(+). Functionally, catalyzes the 2'-O-methylation at nucleotide C2498 in 23S rRNA. The polypeptide is Ribosomal RNA large subunit methyltransferase M (Tolumonas auensis (strain DSM 9187 / NBRC 110442 / TA 4)).